The chain runs to 129 residues: Small ribosomal subunit protein uS11 (129 aa).

It belongs to the universal ribosomal protein uS11 family. Part of the 30S ribosomal subunit. Interacts with proteins S7 and S18. Binds to IF-3.

In terms of biological role, located on the platform of the 30S subunit, it bridges several disparate RNA helices of the 16S rRNA. Forms part of the Shine-Dalgarno cleft in the 70S ribosome. The sequence is that of Small ribosomal subunit protein uS11 from Parabacteroides distasonis (strain ATCC 8503 / DSM 20701 / CIP 104284 / JCM 5825 / NCTC 11152).